Reading from the N-terminus, the 421-residue chain is UDP-N-acetylglucosamine 1-carboxyvinyltransferase (421 aa).

K22 to N23 is a binding site for phosphoenolpyruvate. R93 contacts UDP-N-acetyl-alpha-D-glucosamine. C117 (proton donor) is an active-site residue. Residue C117 is modified to 2-(S-cysteinyl)pyruvic acid O-phosphothioketal. UDP-N-acetyl-alpha-D-glucosamine contacts are provided by residues R122–L126, D308, and L330.

The protein belongs to the EPSP synthase family. MurA subfamily.

The protein localises to the cytoplasm. The enzyme catalyses phosphoenolpyruvate + UDP-N-acetyl-alpha-D-glucosamine = UDP-N-acetyl-3-O-(1-carboxyvinyl)-alpha-D-glucosamine + phosphate. It participates in cell wall biogenesis; peptidoglycan biosynthesis. Its function is as follows. Cell wall formation. Adds enolpyruvyl to UDP-N-acetylglucosamine. The chain is UDP-N-acetylglucosamine 1-carboxyvinyltransferase from Helicobacter hepaticus (strain ATCC 51449 / 3B1).